A 157-amino-acid chain; its full sequence is Protein snakeskin (157 aa).

Over valine 2–threonine 6 the chain is Cytoplasmic. The helical transmembrane segment at isoleucine 7–tyrosine 27 threads the bilayer. The Extracellular portion of the chain corresponds to arginine 28–glutamate 53. A helical transmembrane segment spans residues isoleucine 54–phenylalanine 74. The Cytoplasmic portion of the chain corresponds to leucine 75–glutamate 87. The helical transmembrane segment at isoleucine 88–tyrosine 108 threads the bilayer. Topologically, residues tryptophan 109–alanine 130 are extracellular. Residues valine 131 to isoleucine 151 traverse the membrane as a helical segment. Over histidine 152 to methionine 157 the chain is Cytoplasmic.

Expressed in midgut epithelium (at protein level).

The protein resides in the apicolateral cell membrane. It localises to the cell junction. The protein localises to the septate junction. Its function is as follows. Required for assembly of smooth septate junctions (sSJs). May be important for barrier function of the midgut epithelium. The protein is Protein snakeskin of Bombyx mori (Silk moth).